Here is a 116-residue protein sequence, read N- to C-terminus: uncharacterized protein (116 aa).

Residues 77 to 116 (SATSHYPKADDPQRFARSVSRGPSRVRRPARNSASRPVRR) form a disordered region.

This is an uncharacterized protein from Frog virus 3 (isolate Goorha) (FV-3).